The sequence spans 530 residues: Ubiquitin carboxyl-terminal hydrolase 17-like protein 19 (530 aa).

The USP domain occupies 80 to 375 (AGLQNMGNTC…QAYVLFYIQK (296 aa)). The Nucleophile role is filled by Cys89. The Proton acceptor role is filled by His334. 2 stretches are compositionally biased toward basic and acidic residues: residues 382 to 392 (SESVSRGREPR) and 398 to 413 (DTDR…RDHP). Disordered regions lie at residues 382 to 413 (SESV…RDHP) and 476 to 530 (KNHH…LVCQ). Residues 484 to 495 (SSLLKLSSTTPT) are compositionally biased toward low complexity. The span at 496-505 (HQESMNTGTL) shows a compositional bias: polar residues. Basic residues predominate over residues 510-524 (GRARRSKGKNKHSKR).

This sequence belongs to the peptidase C19 family. USP17 subfamily.

It localises to the nucleus. The protein resides in the endoplasmic reticulum. The catalysed reaction is Thiol-dependent hydrolysis of ester, thioester, amide, peptide and isopeptide bonds formed by the C-terminal Gly of ubiquitin (a 76-residue protein attached to proteins as an intracellular targeting signal).. Functionally, deubiquitinating enzyme that removes conjugated ubiquitin from specific proteins to regulate different cellular processes that may include cell proliferation, progression through the cell cycle, apoptosis, cell migration, and the cellular response to viral infection. The sequence is that of Ubiquitin carboxyl-terminal hydrolase 17-like protein 19 (USP17L19) from Homo sapiens (Human).